The following is a 956-amino-acid chain: Probable hypoxanthine oxidase XdhD (956 aa).

The Mo-molybdopterin site is built by Q414, F445, and A727.

It belongs to the xanthine dehydrogenase family. [2Fe-2S] cluster serves as cofactor. Requires Mo-molybdopterin as cofactor.

Probably has no xanthine dehydrogenase activity; however deletion results in increased adenine sensitivity, suggesting that this protein contributes to the conversion of adenine to guanine nucleotides during purine salvage. The sequence is that of Probable hypoxanthine oxidase XdhD (xdhD) from Escherichia coli (strain K12).